The primary structure comprises 253 residues: MAATTDTEHQEQAGTGGRGRRRPGRIAAQAVSVLGELLITAGLVMGLFVVYSLWWTNVVADRAADKQAEKVRDDWAQDRVGGSGQDGPGALDTKAGIGFLHVPAMSEGDILVEKGTSMKILNDGVAGYYTDPVKATLPTSDEKGNFSLAAHRDGHGARFHNIDKIEKGDPIVFETKDTWYVYKTYAVLPETSKYNVEVLGGIPKESGKKKAGHYITLTTCTPVYTSRYRYVVWGELVRTEKVDGDRTPPKELR.

The span at 1–11 (MAATTDTEHQE) shows a compositional bias: basic and acidic residues. Residues 1–23 (MAATTDTEHQEQAGTGGRGRRRP) form a disordered region. A helical membrane pass occupies residues 30–50 (AVSVLGELLITAGLVMGLFVV). The tract at residues 69–89 (EKVRDDWAQDRVGGSGQDGPG) is disordered. The active site involves C220.

Belongs to the bacterial sortase family. Class E subfamily.

It localises to the cell membrane. The catalysed reaction is The enzyme catalyzes a cell wall sorting reaction in which a surface protein with a sorting signal containing a LPXTG motif is cleaved between the Thr and Gly residue. The resulting threonine carboxyl end of the protein is covalently attached to a pentaglycine cross-bridge of peptidoglycan.. Functionally, transpeptidase that anchors surface proteins to the cell wall. Recognizes Leu-Ala-x-Thr-Gly and Leu-Pro-x-Thr-Gly, with a preference for the former. Unlike the S.aureus sortase it cleaves not only the Thr-Gly motif but also the Ala-X bond; an Ala-Glu bond is a better substrate than the Thr-Gly motif in vitro. Among its possible substrates are the chaplins ChpA, ChpB and ChpC; this enzyme is more important for ChpC attachment than is SrtE1. A double knockout mutant of srtE1 and srtE2 shows a developmental defect in aerial hyphae formation more dramatic than that due to chaplin deletion. The polypeptide is Sortase SrtE2 (Streptomyces coelicolor (strain ATCC BAA-471 / A3(2) / M145)).